Here is a 303-residue protein sequence, read N- to C-terminus: N-acetyl-D-glucosamine kinase (303 aa).

ATP is bound by residues 4-11 (GFDVGGTK) and 133-140 (GFGGGLIF). The Zn(2+) site is built by His-157, Cys-177, Cys-179, and Cys-184.

The protein belongs to the ROK (NagC/XylR) family. NagK subfamily.

It carries out the reaction N-acetyl-D-glucosamine + ATP = N-acetyl-D-glucosamine 6-phosphate + ADP + H(+). The protein operates within cell wall biogenesis; peptidoglycan recycling. Catalyzes the phosphorylation of N-acetyl-D-glucosamine (GlcNAc) derived from cell-wall degradation, yielding GlcNAc-6-P. The chain is N-acetyl-D-glucosamine kinase from Aliivibrio fischeri (strain ATCC 700601 / ES114) (Vibrio fischeri).